Consider the following 294-residue polypeptide: Bifunctional protein FolD (294 aa).

NADP(+) contacts are provided by residues glycine 166–serine 168, serine 191, and isoleucine 232.

Belongs to the tetrahydrofolate dehydrogenase/cyclohydrolase family. Homodimer.

It carries out the reaction (6R)-5,10-methylene-5,6,7,8-tetrahydrofolate + NADP(+) = (6R)-5,10-methenyltetrahydrofolate + NADPH. The catalysed reaction is (6R)-5,10-methenyltetrahydrofolate + H2O = (6R)-10-formyltetrahydrofolate + H(+). It participates in one-carbon metabolism; tetrahydrofolate interconversion. Catalyzes the oxidation of 5,10-methylenetetrahydrofolate to 5,10-methenyltetrahydrofolate and then the hydrolysis of 5,10-methenyltetrahydrofolate to 10-formyltetrahydrofolate. The polypeptide is Bifunctional protein FolD (Afipia carboxidovorans (strain ATCC 49405 / DSM 1227 / KCTC 32145 / OM5) (Oligotropha carboxidovorans)).